Here is a 488-residue protein sequence, read N- to C-terminus: Acetyl-coenzyme A carboxylase carboxyl transferase subunit beta, chloroplastic (488 aa).

One can recognise a CoA carboxyltransferase N-terminal domain in the interval 227–488 (LWIQCDNCYG…LHAFFPLNTN (262 aa)). Positions 231, 234, 247, and 250 each coordinate Zn(2+). Residues 231–250 (CDNCYGLMYKKVKMNVCEQC) form a C4-type zinc finger.

Belongs to the AccD/PCCB family. In terms of assembly, acetyl-CoA carboxylase is a heterohexamer composed of biotin carboxyl carrier protein, biotin carboxylase and 2 subunits each of ACCase subunit alpha and ACCase plastid-coded subunit beta (accD). Zn(2+) serves as cofactor. In terms of tissue distribution, accumulates in fatty acids synthesizing tissues such as embryos, expanding leaves, flower buds, flowers, and developing siliques.

The protein localises to the plastid. It localises to the chloroplast membrane. It is found in the chloroplast stroma. It catalyses the reaction N(6)-carboxybiotinyl-L-lysyl-[protein] + acetyl-CoA = N(6)-biotinyl-L-lysyl-[protein] + malonyl-CoA. It functions in the pathway lipid metabolism; malonyl-CoA biosynthesis; malonyl-CoA from acetyl-CoA: step 1/1. Functionally, component of the acetyl coenzyme A carboxylase (ACC) complex. Biotin carboxylase (BC) catalyzes the carboxylation of biotin on its carrier protein (BCCP) and then the CO(2) group is transferred by the transcarboxylase to acetyl-CoA to form malonyl-CoA. This Arabidopsis thaliana (Mouse-ear cress) protein is Acetyl-coenzyme A carboxylase carboxyl transferase subunit beta, chloroplastic.